We begin with the raw amino-acid sequence, 74 residues long: uncharacterized protein (74 aa).

The signal sequence occupies residues M1 to A19.

This is an uncharacterized protein from Mycobacterium tuberculosis (strain ATCC 25618 / H37Rv).